The primary structure comprises 271 residues: MSRIQNTFAALAAQGRKGLIPFITAGDPDPAKTVELMHALAEGGADVIELGVPFSDPMADGPVIQRSSERALAKGVTLHSVLDDVKRFRARDQKTPVVLMGYANPIERMGADAFAAAARDAGVDGVLVVDYPPEESHDFAAKMRAAGIDPIFLLAPTSTDDRIAAVGQVASGYVYYVSLKGVTGAANLDVSSIAGKIPAIKSRVPLPVGVGFGIRDAATARAVAEVADAVVIGSRLVQLLEQAAPERAAAELAGFVAELRAAIDGAAKPAA.

Active-site proton acceptor residues include glutamate 49 and aspartate 60.

This sequence belongs to the TrpA family. In terms of assembly, tetramer of two alpha and two beta chains.

It catalyses the reaction (1S,2R)-1-C-(indol-3-yl)glycerol 3-phosphate + L-serine = D-glyceraldehyde 3-phosphate + L-tryptophan + H2O. It functions in the pathway amino-acid biosynthesis; L-tryptophan biosynthesis; L-tryptophan from chorismate: step 5/5. Its function is as follows. The alpha subunit is responsible for the aldol cleavage of indoleglycerol phosphate to indole and glyceraldehyde 3-phosphate. The polypeptide is Tryptophan synthase alpha chain (Burkholderia pseudomallei (strain 1106a)).